Consider the following 168-residue polypeptide: Small ribosomal subunit protein uS8 (168 aa).

Residues 59–93 are not found in other S8 sequences; the sequence is EEFKKMKELAEKSPNPKMRRYLQQLIDYNKGTQYP.

This sequence belongs to the universal ribosomal protein uS8 family. Part of the 30S ribosomal subunit. Contacts proteins S5 and S12.

One of the primary rRNA binding proteins, it binds directly to 16S rRNA central domain where it helps coordinate assembly of the platform of the 30S subunit. This chain is Small ribosomal subunit protein uS8, found in Aquifex pyrophilus.